The following is a 324-amino-acid chain: Methionyl-tRNA formyltransferase (324 aa).

A (6S)-5,6,7,8-tetrahydrofolate-binding site is contributed by 113–116 (SLLP).

Belongs to the Fmt family.

The catalysed reaction is L-methionyl-tRNA(fMet) + (6R)-10-formyltetrahydrofolate = N-formyl-L-methionyl-tRNA(fMet) + (6S)-5,6,7,8-tetrahydrofolate + H(+). Functionally, attaches a formyl group to the free amino group of methionyl-tRNA(fMet). The formyl group appears to play a dual role in the initiator identity of N-formylmethionyl-tRNA by promoting its recognition by IF2 and preventing the misappropriation of this tRNA by the elongation apparatus. This is Methionyl-tRNA formyltransferase from Bacteroides fragilis (strain ATCC 25285 / DSM 2151 / CCUG 4856 / JCM 11019 / LMG 10263 / NCTC 9343 / Onslow / VPI 2553 / EN-2).